The following is a 333-amino-acid chain: GTP 3',8-cyclase (333 aa).

Positions 7 to 221 constitute a Radical SAM core domain; the sequence is KFGRVHDYIR…FEACDAIGFE (215 aa). A GTP-binding site is contributed by arginine 16. [4Fe-4S] cluster contacts are provided by cysteine 23 and cysteine 27. Residue tyrosine 29 coordinates S-adenosyl-L-methionine. Residue cysteine 30 participates in [4Fe-4S] cluster binding. Arginine 66 provides a ligand contact to GTP. S-adenosyl-L-methionine is bound at residue glycine 70. Threonine 97 is a binding site for GTP. Serine 121 serves as a coordination point for S-adenosyl-L-methionine. Residue lysine 158 participates in GTP binding. Methionine 192 lines the S-adenosyl-L-methionine pocket. [4Fe-4S] cluster-binding residues include cysteine 257 and cysteine 260. 262 to 264 provides a ligand contact to GTP; that stretch reads RLR. Cysteine 274 provides a ligand contact to [4Fe-4S] cluster.

The protein belongs to the radical SAM superfamily. MoaA family. Monomer and homodimer. The cofactor is [4Fe-4S] cluster.

The enzyme catalyses GTP + AH2 + S-adenosyl-L-methionine = (8S)-3',8-cyclo-7,8-dihydroguanosine 5'-triphosphate + 5'-deoxyadenosine + L-methionine + A + H(+). It functions in the pathway cofactor biosynthesis; molybdopterin biosynthesis. Functionally, catalyzes the cyclization of GTP to (8S)-3',8-cyclo-7,8-dihydroguanosine 5'-triphosphate. In Listeria welshimeri serovar 6b (strain ATCC 35897 / DSM 20650 / CCUG 15529 / CIP 8149 / NCTC 11857 / SLCC 5334 / V8), this protein is GTP 3',8-cyclase.